Here is a 425-residue protein sequence, read N- to C-terminus: Histone-binding protein RBBP7 (425 aa).

Alanine 2 carries the post-translational modification N-acetylalanine. Serine 3 is modified (phosphoserine). Position 4 is an N6-acetyllysine; alternate (lysine 4). A Glycyl lysine isopeptide (Lys-Gly) (interchain with G-Cter in SUMO2); alternate cross-link involves residue lysine 4. A Glycyl lysine isopeptide (Lys-Gly) (interchain with G-Cter in ubiquitin); alternate cross-link involves residue lysine 4. The residue at position 10 (threonine 10) is a Phosphothreonine. 7 WD repeats span residues 47–122, 128–173, 181–217, 228–269, 275–312, 318–369, and 376–403; these read QWLP…KINH, RARY…LRLR, GLSW…KIVD, VVED…HLVD, VNCL…LHTF, EIFQ…LFIH, and ISDF…IWQM. At serine 95 the chain carries Phosphoserine. Residue lysine 101 forms a Glycyl lysine isopeptide (Lys-Gly) (interchain with G-Cter in SUMO2) linkage. Lysine 119 carries the N6-acetyllysine modification. Lysine 155 participates in a covalent cross-link: Glycyl lysine isopeptide (Lys-Gly) (interchain with G-Cter in SUMO2). Lysine 159 carries the N6-acetyllysine; alternate modification. Lysine 159 participates in a covalent cross-link: Glycyl lysine isopeptide (Lys-Gly) (interchain with G-Cter in SUMO2); alternate. Serine 354 bears the Phosphoserine mark.

It belongs to the WD repeat RBAP46/RBAP48/MSI1 family. As to quaternary structure, binds directly to helix 1 of the histone fold of histone H4, a region that is not accessible when H4 is in chromatin. Subunit of the type B histone acetyltransferase (HAT) complex, composed of RBBP7 and HAT1. Subunit of the core histone deacetylase (HDAC) complex, which is composed of HDAC1, HDAC2, RBBP4 and RBBP7. The core HDAC complex associates with SIN3A, ARID4B/SAP180, SAP18, SAP30, SAP130, SUDS3/SAP45 and possibly ARID4A/RBP1 and ING1 to form the SIN3 HDAC complex. Component of the nucleosome remodeling and deacetylase (NuRD) repressor complex, composed of core proteins MTA1, MTA2, MTA3, RBBP4, RBBP7, HDAC1, HDAC2, MBD2, MBD3, and peripherally associated proteins CDK2AP1, CDK2AP2, GATAD2A, GATAD2B, CHD3, CHD4 and CHD5. The exact stoichiometry of the NuRD complex is unknown, and some subunits such as MBD2 and MBD3, GATAD2A and GATAD2B, and CHD3, CHD4 and CHD5 define mutually exclusive NuRD complexes. The NuRD complex may interact with MBD3L1. The NuRD complex may interact with MBD3L2. Subunit of the PRC2/EED-EZH2 complex, which is composed of at least EED, EZH2, RBBP4, RBBP7 and SUZ12. The PRC2/EED-EZH2 complex may also associate with HDAC1. Component of the NURF-1 ISWI chromatin remodeling complex (also called the nucleosome-remodeling factor (NURF) complex) at least composed of SMARCA1, BPTF, RBBP4 and RBBP7. Within the complex interacts with SMARCA1. Component of the BPFT-SMARCA1 complex at least composed of SMARCA1, BPFT, RBBP4 and RBBP7; the complex is catalytically inactive and does not remodel chromatin. Within the complex interacts with SMARCA1. Interacts with BRCA1. Interacts with CDK2AP1. Interacts with CENPA. Interacts with CHD3. Interacts with CHD4. Interacts with CREBBP, and this interaction may be enhanced by the binding of phosphorylated CREB1 to CREBBP. Interacts with HDAC7. Interacts with MTA1. Interacts with PWWP2B. Interacts with RB1 (via viral protein-binding domain). Interacts with SUV39H1.

Its subcellular location is the nucleus. Its function is as follows. Core histone-binding subunit that may target chromatin remodeling factors, histone acetyltransferases and histone deacetylases to their histone substrates in a manner that is regulated by nucleosomal DNA. Component of several complexes which regulate chromatin metabolism. These include the type B histone acetyltransferase (HAT) complex, which is required for chromatin assembly following DNA replication; the core histone deacetylase (HDAC) complex, which promotes histone deacetylation and consequent transcriptional repression; the nucleosome remodeling and histone deacetylase complex (the NuRD complex), which promotes transcriptional repression by histone deacetylation and nucleosome remodeling; and the PRC2/EED-EZH2 complex, which promotes repression of homeotic genes during development; and the NURF (nucleosome remodeling factor) complex. The sequence is that of Histone-binding protein RBBP7 (RBBP7) from Bos taurus (Bovine).